The following is a 578-amino-acid chain: Zinc finger protein with KRAB and SCAN domains 8 (578 aa).

Residues 1-20 (MAEESRKPSAPSPPDQTPEE) are disordered. The residue at position 12 (serine 12) is a Phosphoserine. Residue lysine 26 forms a Glycyl lysine isopeptide (Lys-Gly) (interchain with G-Cter in SUMO2) linkage. The 83-residue stretch at 51–133 (RLRFRQLCYQ…TLLEDLERQI (83 aa)) folds into the SCAN box domain. The segment at 158–205 (ASAPEPPNTQLQSEATQHKSPVPQESQERAMSTSQSPTRSQKGSSGDQ) is disordered. Over residues 165 to 205 (NTQLQSEATQHKSPVPQESQERAMSTSQSPTRSQKGSSGDQ) the composition is skewed to polar residues. Glycyl lysine isopeptide (Lys-Gly) (interchain with G-Cter in SUMO2) cross-links involve residues lysine 176 and lysine 199. Residue serine 201 is modified to Phosphoserine. The KRAB domain maps to 220–316 (EKIEDMAVSL…GRLERQRGNP (97 aa)). Residues lysine 221, lysine 272, and lysine 288 each participate in a glycyl lysine isopeptide (Lys-Gly) (interchain with G-Cter in SUMO2) cross-link. 2 C2H2-type zinc fingers span residues 322–344 (HKCD…WRIH) and 350–372 (YQCN…QDIH). Glycyl lysine isopeptide (Lys-Gly) (interchain with G-Cter in SUMO2) cross-links involve residues lysine 374 and lysine 376. C2H2-type zinc fingers lie at residues 378 to 400 (YHCK…QRIH), 406 to 428 (YQCN…QRIH), 434 to 456 (YECN…QRIH), 462 to 484 (YECD…QRSH), 490 to 512 (YKCN…QRIH), 518 to 540 (YKCK…LRIH), and 546 to 568 (YQCN…QRIH). Residues lysine 413 and lysine 441 each participate in a glycyl lysine isopeptide (Lys-Gly) (interchain with G-Cter in SUMO2) cross-link. Residue lysine 502 forms a Glycyl lysine isopeptide (Lys-Gly) (interchain with G-Cter in SUMO2) linkage. A Glycyl lysine isopeptide (Lys-Gly) (interchain with G-Cter in SUMO2) cross-link involves residue lysine 572.

The protein belongs to the krueppel C2H2-type zinc-finger protein family.

It is found in the nucleus. In terms of biological role, may be involved in transcriptional regulation. In Pan troglodytes (Chimpanzee), this protein is Zinc finger protein with KRAB and SCAN domains 8 (ZKSCAN8).